Reading from the N-terminus, the 79-residue chain is UPF0154 protein llmg_1186 (79 aa).

A helical membrane pass occupies residues 4 to 24; it reads ILAILLMVVCLLAGFFLGTWF.

It belongs to the UPF0154 family.

The protein localises to the cell membrane. The protein is UPF0154 protein llmg_1186 of Lactococcus lactis subsp. cremoris (strain MG1363).